The primary structure comprises 480 residues: F-box/LRR-repeat protein 14 (480 aa).

One can recognise an F-box domain in the interval D11–I58. LRR repeat units lie at residues G61 to Y86, G94 to F119, C120 to F144, A145 to R170, C171 to N196, C197 to V222, M229 to N257, C258 to M283, C284 to V309, T322 to F347, L355 to H379, V380 to H404, C405 to K429, C430 to D454, and C455 to Y480.

The chain is F-box/LRR-repeat protein 14 (FBL14) from Arabidopsis thaliana (Mouse-ear cress).